The chain runs to 752 residues: Two pore channel protein 2 (752 aa).

Topologically, residues 1–84 are cytoplasmic; the sequence is MAEPQAESEP…RRYYSNVCQR (84 aa). A helical transmembrane segment spans residues 85–105; that stretch reads TLSFTIFLILFLAFIETPSSL. At 106–127 the chain is on the extracellular side; sequence TSTADVRYRAAPWEPPCGLTES. The chain crosses the membrane as a helical span at residues 128-148; the sequence is VEVLCLLVFAADLSVKGYLFG. Over 149 to 155 the chain is Cytoplasmic; the sequence is WAHFQKN. The helical transmembrane segment at 156–176 threads the bilayer; sequence LWLLGYLVVLVVSLVDWTVSL. The Extracellular portion of the chain corresponds to 177-183; sequence SLVCHEP. Residues 184-204 traverse the membrane as a helical segment; that stretch reads LRIRRLLRPFFLLQNSSMMKK. The segment at 203–207 is interaction with phosphatidylinositol 3,5-bisphosphate; it reads KKTLK. Topologically, residues 205–218 are cytoplasmic; the sequence is TLKCIRWSLPEMAS. The chain crosses the membrane as a helical span at residues 219–239; sequence VGLLLAIHLCLFTMFGMLLFA. Residues 240 to 254 are Extracellular-facing; it reads GGKQDDGQDRERLTY. The segment at residues 255–279 is an intramembrane region (helical; Pore-forming); it reads FQNLPESLTSLLVLLTTANNPDVMI. At 280-289 the chain is on the extracellular side; that stretch reads PAYSKNRAYA. Residues 290 to 310 traverse the membrane as a helical segment; it reads IFFIVFTVIGSLFLMNLLTAI. Residues 311–436 lie on the Cytoplasmic side of the membrane; sequence IYSQFRGYLM…FLFGHYYFDY (126 aa). A helical membrane pass occupies residues 437–459; the sequence is LGNLIALANLVSICVFLVLDADV. The Extracellular segment spans residues 460–465; that stretch reads LPAERD. A helical transmembrane segment spans residues 466–486; the sequence is DFILGILNCVFIVYYLLEMLL. At 487–502 the chain is on the cytoplasmic side; the sequence is KVFALGLRGYLSYPSN. Residues 503–523 form a helical membrane-spanning segment; the sequence is VFDGLLTVVLLVLEISTLAVY. The Extracellular portion of the chain corresponds to 524 to 554; sequence RLPHPGWRPEMVGLLSLWDMTRMLNMLIVFR. A helical transmembrane segment spans residues 555-575; it reads FLRIIPSMKLMAVVASTVLGL. At 576–580 the chain is on the cytoplasmic side; it reads VQNMR. Residues 581–601 traverse the membrane as a helical segment; the sequence is AFGGILVVVYYVFAIIGINLF. The Extracellular portion of the chain corresponds to 602 to 635; that stretch reads RGVIVALPGNSSLAPANGSAPCGSFEQLEYWANN. N611 and N618 each carry an N-linked (GlcNAc...) asparagine glycan. The helical; Pore-forming intramembrane region spans 636–658; sequence FDDFAAALVTLWNLMVVNNWQVF. Residues 659-673 are Extracellular-facing; that stretch reads LDAYRRYSGPWSKIY. A helical transmembrane segment spans residues 674-694; that stretch reads FVLWWLVSSVIWVNLFLALIL. Over 695–752 the chain is Cytoplasmic; sequence ENFLHKWDPRSHLQPLAGTPEATYQMTVELLFRDILEEPGEDELTERLSQHPHLWLCR.

Belongs to the calcium channel alpha-1 subunit (TC 1.A.1.11) family. Two pore calcium channel subfamily. Homodimer. Interacts with LRRK2. Interacts with HAX1. Interacts with MTOR; the interaction is required for TPCN2 ATP sensitivity. Found in a complex with LSM12, TPCN1 and TPCN2. Interacts with LSM12. N-glycosylated. Widely expressed. Expressed at high level in liver and kidney.

The protein localises to the late endosome membrane. The protein resides in the lysosome membrane. It is found in the melanosome membrane. The enzyme catalyses Na(+)(in) = Na(+)(out). It carries out the reaction Ca(2+)(in) = Ca(2+)(out). Its activity is regulated as follows. Regulated by Mg(2+) ions, cytosolic Mg(2+) selectively inhibits outward current while lysosomal Mg(2+) modestly inhibits both the outward and inward currents. In the absence of Mg(2+), NAADP readily activates TPCN2, with properties similar to PI(3,5)P2. Na(+) current is inhibited by ATP in a MTORC-dependent manner. ATP sensitivity is independent of PI(3,5)P2. Both current elicited by PI(3,5)P2 as well as NAADP are inhibited by tetrandrine. Its function is as follows. Intracellular channel initially characterized as a non-selective Ca(2+)-permeable channel activated by NAADP (nicotinic acid adenine dinucleotide phosphate), it is also a highly-selective Na(+) channel activated directly by PI(3,5)P2 (phosphatidylinositol 3,5-bisphosphate). Localizes to the lysosomal and late endosome membranes where it regulates organellar membrane excitability, membrane trafficking, and pH homeostasis. Is associated with a plethora of physiological processes, including mTOR-dependent nutrient sensing, skin pigmentation and autophagy. Ion selectivity is not fixed but rather agonist-dependent and under defined ionic conditions, can be readily activated by both NAADP and PI(3,5)P2. As calcium channel, it increases the pH in the lysosomal lumen, as sodium channel, it promotes lysosomal exocytosis. Plays a crucial role in endolysosomal trafficking in the endolysosomal degradation pathway and is potentially involved in the homeostatic control of many macromolecules and cell metabolites. Also expressed in melanosomes of pigmented cells where mediates a Ca(2+) channel and/or PI(3,5)P2-activated melanosomal Na(+) channel to acidify pH and inhibit tyrosinase activity required for melanogenesis and pigmentation. Unlike the voltage-dependent TPCN1, TPCN2 is voltage independent and can be activated solely by PI(3,5)P2 binding. In contrast, PI(4,5)P2, PI(3,4)P2, PI(3)P and PI(5)P have no obvious effect on channel activation. (Microbial infection) During Ebola virus (EBOV) infection, controls the movement of endosomes containing virus particles and is required by EBOV to escape from the endosomal network into the cell cytoplasm. In terms of biological role, (Microbial infection) Required for cell entry of coronaviruses SARS-CoV and SARS-CoV-2, as well as human coronavirus EMC (HCoV-EMC), by endocytosis. This chain is Two pore channel protein 2, found in Homo sapiens (Human).